The following is a 30-amino-acid chain: NADH-ubiquinone oxidoreductase 18 kDa subunit (30 aa).

In terms of assembly, complex I is composed of about 45 different subunits.

It is found in the mitochondrion inner membrane. The enzyme catalyses a ubiquinone + NADH + 5 H(+)(in) = a ubiquinol + NAD(+) + 4 H(+)(out). Transfer of electrons from NADH to the respiratory chain. The immediate electron acceptor for the enzyme is believed to be ubiquinone. This Solanum tuberosum (Potato) protein is NADH-ubiquinone oxidoreductase 18 kDa subunit.